The sequence spans 1187 residues: RNA helicase Mov10l1 (1187 aa).

Residues 273 to 347 (RSKSCPGAAA…EPEPGGLIPP (75 aa)) are disordered. Basic and acidic residues-rich tracts occupy residues 296–307 (HHREDKTDEIPE) and 322–339 (ACKEESREKGNTPEKQEP). 5 tandem repeats follow at residues 642-652 (TRNDSQSITNI), 653-663 (IRNDGQSITNV), 664-674 (TRNDGQPITKV), 675-685 (TRNNSQSITNI), and 686-696 (TRNDGQPITKN). A 5 X 11 AA tandem repeats of [TI]-R-N-[DN]-[GS]-Q-[SP]-I-T-[NK]-[IVN] region spans residues 642–696 (TRNDSQSITNIIRNDGQSITNVTRNDGQPITKVTRNNSQSITNITRNDGQPITKN). The segment at 686–727 (TRNDGQPITKNKKTVKDQTKHTTEERHVGTTDQPEKASSTAE) is disordered. The segment covering 699–720 (TVKDQTKHTTEERHVGTTDQPE) has biased composition (basic and acidic residues). 772 to 779 (GPPGTGKT) serves as a coordination point for ATP. The DEAG box motif lies at 888–891 (DEAG).

Belongs to the DNA2/NAM7 helicase family. SDE3 subfamily. In terms of assembly, interacts with PIWIL1. Interacts with PIWIL2. Interacts with PIWIL4. Interacts with HSPA2. Interacts with PLD6. Isoform 1: Specifically expressed in testis. Isoform 1: In testis, present in pachytene spermatocytes but absent in postmeiotic spermatids (at protein level). Isoform 2: Present in cardiomyocytes (at protein level). Isoform 2: Heart specific. Isoform 3: Heart specific and is specifically expressed in cardiac myocytes.

Its subcellular location is the cytoplasm. It carries out the reaction ATP + H2O = ADP + phosphate + H(+). Functionally, ATP-dependent RNA helicase required during spermatogenesis to repress transposable elements and prevent their mobilization, which is essential for germline integrity. Acts via the piRNA metabolic process, which mediates the repression of transposable elements during meiosis by forming complexes composed of piRNAs and Piwi proteins and governs the methylation and subsequent repression of transposons. Involved in the primary piRNA metabolic process. Specifically binds to piRNA precursors and promotes the generation of intermediate piRNA processing fragments that are subsequently loaded to Piwi proteins. Acts via its ATP-dependent RNA helicase activity: displays 5'-3' RNA unwinding activity and probably mediates unwinding and funneling of single-stranded piRNA precursor transcripts to the endonuclease that catalyzes the first cleavage step of piRNA processing to generate piRNA intermediate fragments that are subsequently loaded to Piwi proteins. In terms of biological role, may act downstream of MEF2C during heart formation. Acts as a cardiac-specific suppressor of cardiomyocyte hypertrophy and cell cycle progression, suggesting that it may suppress these processes through the regulation of CDKN1A. Such results however require additional evidence. The chain is RNA helicase Mov10l1 from Mus musculus (Mouse).